A 400-amino-acid chain; its full sequence is NADH-quinone oxidoreductase subunit D (400 aa).

Belongs to the complex I 49 kDa subunit family. NDH-1 is composed of 14 different subunits. Subunits NuoB, C, D, E, F, and G constitute the peripheral sector of the complex.

The protein localises to the cell inner membrane. The catalysed reaction is a quinone + NADH + 5 H(+)(in) = a quinol + NAD(+) + 4 H(+)(out). Its function is as follows. NDH-1 shuttles electrons from NADH, via FMN and iron-sulfur (Fe-S) centers, to quinones in the respiratory chain. The immediate electron acceptor for the enzyme in this species is believed to be a menaquinone. Couples the redox reaction to proton translocation (for every two electrons transferred, four hydrogen ions are translocated across the cytoplasmic membrane), and thus conserves the redox energy in a proton gradient. In Chlorobium phaeobacteroides (strain DSM 266 / SMG 266 / 2430), this protein is NADH-quinone oxidoreductase subunit D.